A 257-amino-acid chain; its full sequence is Neuroendocrine secretory protein 55 (257 aa).

The N-terminal stretch at 1–46 (MDRRSRAQQWRRARHNYNDLCPPIGRRAATALLWLSCSIALLRALA) is a signal peptide. Residues 61–257 (SFLNAHHRSA…RKGPIPIRRH (197 aa)) are disordered. Low complexity predominate over residues 70 to 82 (AAAAAAAQVLPES). Positions 86–103 (ESDHEHEEVEPELARPEC) are enriched in basic and acidic residues. Residues 104–139 (LEYDQDDYETETDSETEPESDIESETEIETEPETEP) are compositionally biased toward acidic residues. Residues 200-211 (EPQRGPLDQDPR) show a composition bias toward basic and acidic residues. Residues 227-237 (PRRCKTRRPAR) are compositionally biased toward basic residues.

Belongs to the NESP55 family. Post-translationally, binds keratan sulfate chains. May be proteolytically processed to give rise to a number of active peptides.

The protein resides in the cytoplasmic vesicle. It localises to the secretory vesicle. Its subcellular location is the secreted. The sequence is that of Neuroendocrine secretory protein 55 from Mus musculus (Mouse).